Consider the following 230-residue polypeptide: Flagellar L-ring protein (230 aa).

The N-terminal stretch at methionine 1–alanine 15 is a signal peptide. Cysteine 16 carries N-palmitoyl cysteine lipidation. Cysteine 16 is lipidated: S-diacylglycerol cysteine.

The protein belongs to the FlgH family. The basal body constitutes a major portion of the flagellar organelle and consists of four rings (L,P,S, and M) mounted on a central rod.

The protein localises to the cell outer membrane. Its subcellular location is the bacterial flagellum basal body. In terms of biological role, assembles around the rod to form the L-ring and probably protects the motor/basal body from shearing forces during rotation. The protein is Flagellar L-ring protein of Xanthomonas axonopodis pv. citri (strain 306).